The primary structure comprises 271 residues: DNA-directed RNA polymerase subunit Rpo3 (271 aa).

Belongs to the archaeal Rpo3/eukaryotic RPB3 RNA polymerase subunit family. Part of the RNA polymerase complex.

It localises to the cytoplasm. The enzyme catalyses RNA(n) + a ribonucleoside 5'-triphosphate = RNA(n+1) + diphosphate. Functionally, DNA-dependent RNA polymerase (RNAP) catalyzes the transcription of DNA into RNA using the four ribonucleoside triphosphates as substrates. The chain is DNA-directed RNA polymerase subunit Rpo3 from Thermoplasma volcanium (strain ATCC 51530 / DSM 4299 / JCM 9571 / NBRC 15438 / GSS1).